Consider the following 397-residue polypeptide: Dual-specificity RNA methyltransferase RlmN (397 aa).

Residue Glu-130 is the Proton acceptor of the active site. Residues 138–377 enclose the Radical SAM core domain; the sequence is VEDRGAVCIS…ASPIRTPRGR (240 aa). Residues Cys-145 and Cys-383 are joined by a disulfide bond. [4Fe-4S] cluster contacts are provided by Cys-152, Cys-156, and Cys-159. Residues 209–210, Ser-241, 263–265, and Asn-340 each bind S-adenosyl-L-methionine; these read GE and SLH. The S-methylcysteine intermediate role is filled by Cys-383.

It belongs to the radical SAM superfamily. RlmN family. [4Fe-4S] cluster is required as a cofactor.

It is found in the cytoplasm. It catalyses the reaction adenosine(2503) in 23S rRNA + 2 reduced [2Fe-2S]-[ferredoxin] + 2 S-adenosyl-L-methionine = 2-methyladenosine(2503) in 23S rRNA + 5'-deoxyadenosine + L-methionine + 2 oxidized [2Fe-2S]-[ferredoxin] + S-adenosyl-L-homocysteine. The enzyme catalyses adenosine(37) in tRNA + 2 reduced [2Fe-2S]-[ferredoxin] + 2 S-adenosyl-L-methionine = 2-methyladenosine(37) in tRNA + 5'-deoxyadenosine + L-methionine + 2 oxidized [2Fe-2S]-[ferredoxin] + S-adenosyl-L-homocysteine. In terms of biological role, specifically methylates position 2 of adenine 2503 in 23S rRNA and position 2 of adenine 37 in tRNAs. m2A2503 modification seems to play a crucial role in the proofreading step occurring at the peptidyl transferase center and thus would serve to optimize ribosomal fidelity. The sequence is that of Dual-specificity RNA methyltransferase RlmN from Granulibacter bethesdensis (strain ATCC BAA-1260 / CGDNIH1).